Here is a 213-residue protein sequence, read N- to C-terminus: Isomeliandiol synthase MOI2 (213 aa).

Transmembrane regions (helical) follow at residues 18–38 (AALH…SWFI), 52–72 (VLCW…YYVF), 109–129 (IESM…YALA), 137–157 (ILQF…FLSA), and 171–191 (YWAY…LIAI). An EXPERA domain is found at 48–190 (MDRVVLCWWA…IWVIVPALIA (143 aa)).

Belongs to the EBP family. Mainly expressed in petioles.

The protein resides in the membrane. The catalysed reaction is 7,8-epoxymelianol = isomeliandiol. It participates in secondary metabolite biosynthesis; terpenoid biosynthesis. Its function is as follows. Isomerase involved in the biosynthesis of limonoids triterpene natural products such as azadirachtin, an antifeedant widely used as bioinsecticide, and possessing many medicinal applications including anti-tumoral, anti-malarial, anti-rheumatic, antibacterial, anti-inflammatory, anti-pyretic and diuretic effects. Catalyzes the conversion of 7,8-epoxymelianol to isomeliandiol via skeletal rearrangements. This chain is Isomeliandiol synthase MOI2, found in Melia azedarach (Chinaberry tree).